The following is an 898-amino-acid chain: MRLFVSEGAPGSLPVLAAAGRAQGRAELLISTVGPEECVVPFLTRPKVPVLQLDSGNYLFSTSAICRYFFLLSGWEQDDLTNQWLEWEATELQPALSAALYYLVVQGKKGEDVLGPVRRALTHIDHSLSRRSCPFLAGETESLADIVLWGALYPLLQDPSYLPEELGALHSWFQTLSSQEPCQRAAETVLKQQGVLALRPYLQKQPQPSSLEGRLVSNEPEEEELATLSEEEIAVAVAAWEKGLESLPPLRPQQNPVLPVAGERNVLITSALPYVNNVPHLGNIIGCVLSADVFARYSRLRQWNTLYLCGTDEYGTATETKAMEEGLTPQEICDKYHVIHADIYRWFNISFDFFGRTTTPQQTKITQDIFQRLLARGFVLQDTVEQLRCEHCARFLADRFVEGVCPFCGYEEARGDQCDKCGKLINAIELKKPQCKVCRSCPVVKSSQHLFLDLPKLAARVEEWLEKTLPGSDWTANARFIIRSWLRDGLKPRCITRDLKWGTPVPLEGFEDKVFYVWFDATIGYLSITANYTDQWEKWWKNPEQVNLYQFMAKDNVPFHGIVFPSSALGAEDNYTLVSHLIATEYLNYEDGKFSKSRGVGVFGDMAQDTGIPADIWRFYLLYNRPEGQDSAFSWTDMLFKNNSELLNNLGNFINRAGMFVSKFFGGFVPEMVLTSDDQRLLTHITLELQHYHQLLEKVRIRDALRSILTISRHGNQYIQVNEPWKRIKGGEADRQRAGTVTGLAVNIAALLSVMLQPYMPTVSATIQAQLQLPPPACSILPTNFLCTLPAGHQIGTVSPLFQKLENDQIESLKQRFSGGQAKASPKTAAGLTTAGPQQIQALTEEVTKQGNIVRELKAQKADKNQIAAEVAKLLDLKKQLALAEGKPLETSKGKKKK.

One can recognise a GST C-terminal domain in the interval 74-198 (GWEQDDLTNQ…VLKQQGVLAL (125 aa)). Positions 273 to 283 (PYVNNVPHLGN) match the 'HIGH' region motif. Positions 593-597 (KFSKS) match the 'KMSKS' region motif. Residue lysine 596 participates in ATP binding. At serine 825 the chain carries Phosphoserine. Phosphothreonine is present on threonine 833. The 57-residue stretch at 839 to 895 (QIQALTEEVTKQGNIVRELKAQKADKNQIAAEVAKLLDLKKQLALAEGKPLETSKGK) folds into the WHEP-TRS domain.

Belongs to the class-I aminoacyl-tRNA synthetase family. As to quaternary structure, monomer. Part of a multisubunit complex that groups tRNA ligases for Arg (RARS1), Asp (DARS1), Gln (QARS1), Ile (IARS1), Leu (LARS1), Lys (KARS1), Met (MARS1) the bifunctional ligase for Glu and Pro (EPRS1) and the auxiliary subunits AIMP1/p43, AIMP2/p38 and EEF1E1/p18. Forms a linear complex that contains MARS1, EEF1E1, EPRS1 and AIMP2 that is at the core of the multisubunit complex.

It is found in the cytoplasm. Its subcellular location is the cytosol. It localises to the nucleus. The protein resides in the nucleolus. The enzyme catalyses tRNA(Met) + L-methionine + ATP = L-methionyl-tRNA(Met) + AMP + diphosphate. In terms of biological role, catalyzes the specific attachment of an amino acid to its cognate tRNA in a 2 step reaction: the amino acid (AA) is first activated by ATP to form AA-AMP and then transferred to the acceptor end of the tRNA. Plays a role in the synthesis of ribosomal RNA in the nucleolus. This chain is Methionine--tRNA ligase, cytoplasmic (MARS1), found in Bos taurus (Bovine).